Here is a 225-residue protein sequence, read N- to C-terminus: Protein-L-isoaspartate O-methyltransferase (225 aa).

S75 is a catalytic residue.

Belongs to the methyltransferase superfamily. L-isoaspartyl/D-aspartyl protein methyltransferase family.

It is found in the cytoplasm. It carries out the reaction [protein]-L-isoaspartate + S-adenosyl-L-methionine = [protein]-L-isoaspartate alpha-methyl ester + S-adenosyl-L-homocysteine. In terms of biological role, catalyzes the methyl esterification of L-isoaspartyl residues in peptides and proteins that result from spontaneous decomposition of normal L-aspartyl and L-asparaginyl residues. It plays a role in the repair and/or degradation of damaged proteins. In Xanthomonas oryzae pv. oryzae (strain PXO99A), this protein is Protein-L-isoaspartate O-methyltransferase.